The following is a 475-amino-acid chain: Peroxisome proliferator-activated receptor gamma (475 aa).

Threonine 54 is a glycosylation site (O-linked (GlcNAc) threonine). Phosphoserine; by MAPK is present on serine 82. A DNA-binding region (nuclear receptor) is located at residues 106–180; the sequence is AIECRVCGDK…VGMSHNAIRF (75 aa). NR C4-type zinc fingers lie at residues 109-129 and 146-168; these read CRVC…CEGC and CDLN…FQKC. An interaction with FAM120B region spans residues 175–250; sequence HNAIRFGRMP…DKSPFVIYDM (76 aa). The NR LBD domain occupies 208–473; it reads DLRALAKHLY…HPLLQEIYKD (266 aa). A Glycyl lysine isopeptide (Lys-Gly) (interchain with G-Cter in ubiquitin) cross-link involves residue lysine 222. The short motif at 465–473 is the 9aaTAD element; sequence PLLQEIYKD.

It belongs to the nuclear hormone receptor family. NR1 subfamily. In terms of assembly, interacts with FOXO1 (acetylated form). Heterodimer with other nuclear receptors, such as RXRA. The heterodimer with the retinoic acid receptor RXRA is called adipocyte-specific transcription factor ARF6. Interacts with NCOA6 coactivator, leading to a strong increase in transcription of target genes. Interacts with coactivator PPARBP, leading to a mild increase in transcription of target genes. Interacts with NOCA7 in a ligand-inducible manner. Interacts with NCOA1 and NCOA2 LXXLL motifs. Interacts with ASXL1, ASXL2, DNTTIP2, FAM120B, MAP2K1/MEK1, NR0B2, PDPK1, PRDM16, PRMT2 and TGFB1I1. Interacts (when activated by agonist) with PPP5C. Interacts with HELZ2 and THRAP3; the interaction stimulates the transcriptional activity of PPARG. Interacts with PER2, the interaction is ligand dependent and blocks PPARG recruitment to target promoters. Interacts with NOCT. Interacts with ACTN4. Interacts (when in the liganded conformation) with GPS2. Interacts with CRY1 and CRY2 in a ligand-dependent manner. In the absence of hormonal ligand, interacts with TACC1. In macrophages, interacts with PAQR3 and STUB1; the interactions promote PPARG poylubiquitination and STUB1-mediated degradation. O-GlcNAcylation at Thr-54 reduces transcriptional activity in adipocytes. In terms of processing, phosphorylated at basal conditions and dephosphorylated when treated with the ligand. May be dephosphorylated by PPP5C. The phosphorylated form may be inactive and dephosphorylation induces adipogenic activity. Post-translationally, ubiquitinated by E3 ubiquitin-protein ligase complex containing FBXO9; leading to proteasomal degradation. Ubiquitinated at Lys-222 by TRIM55 leading to proteasomal degradation. Ubiquitinated by E3 ubiquitin-protein ligase STUB1/CHIP; leading to proteasomal degradation.

Its subcellular location is the nucleus. The protein localises to the cytoplasm. With respect to regulation, PDPK1 activates its transcriptional activity independently of its kinase activity. Interacts with HELZ2 and THRAP3; the interaction enhances the transcriptional activity of PPARG. In terms of biological role, nuclear receptor that binds peroxisome proliferators such as hypolipidemic drugs and fatty acids. Once activated by a ligand, the nuclear receptor binds to DNA specific PPAR response elements (PPRE) and modulates the transcription of its target genes, such as acyl-CoA oxidase. It therefore controls the peroxisomal beta-oxidation pathway of fatty acids. Key regulator of adipocyte differentiation and glucose homeostasis. ARF6 acts as a key regulator of the tissue-specific adipocyte P2 (aP2) enhancer. Acts as a critical regulator of gut homeostasis by suppressing NF-kappa-B-mediated pro-inflammatory responses. Plays a role in the regulation of cardiovascular circadian rhythms by regulating the transcription of BMAL1 in the blood vessels. This Cricetulus griseus (Chinese hamster) protein is Peroxisome proliferator-activated receptor gamma (PPARG).